The following is a 353-amino-acid chain: Protein XRP2 (353 aa).

The tract at residues 1-37 is disordered; that stretch reads MGCFFSKKAKRKRNSEEEQPQQDGEEPKQYSWDKREK. The N-myristoyl glycine moiety is linked to residue Gly-2. Cys-3 is lipidated: S-palmitoyl cysteine. The span at 25 to 37 shows a compositional bias: basic and acidic residues; it reads EEPKQYSWDKREK. A C-CAP/cofactor C-like domain is found at 27–182; sequence PKQYSWDKRE…TWSNIHDFTP (156 aa). GTP is bound by residues 101-102 and 118-121; these read GS and QQFR.

Belongs to the TBCC family. Myristoylated on Gly-2; which may be required for membrane targeting. Post-translationally, palmitoylated on Cys-3; which may be required for plasma membrane targeting.

Its subcellular location is the cell membrane. Its function is as follows. Acts as a GTPase-activating protein (GAP) for tubulin in concert with tubulin-specific chaperone C, but does not enhance tubulin heterodimerization. Acts as a GTPase-activating protein. May act as guanine nucleotide dissociation inhibitor towards ADP-ribosylation factor-like proteins. The protein is Protein XRP2 (rp2) of Xenopus laevis (African clawed frog).